Here is a 187-residue protein sequence, read N- to C-terminus: Ribosome-recycling factor (187 aa).

The protein belongs to the RRF family.

Its subcellular location is the cytoplasm. Responsible for the release of ribosomes from messenger RNA at the termination of protein biosynthesis. May increase the efficiency of translation by recycling ribosomes from one round of translation to another. The chain is Ribosome-recycling factor from Methylorubrum populi (strain ATCC BAA-705 / NCIMB 13946 / BJ001) (Methylobacterium populi).